The chain runs to 690 residues: Subtilisin-like protease 1 (690 aa).

Residues 1–25 (MMLNKKVVALCTLTLHLFCIFLCLG) form the signal peptide. A propeptide spans 26–219 (KEVRSEENGK…IESDKLVSAD (194 aa)) (inhibition peptide). The tract at residues 99-131 (EKNKNDNHNNNNNNNNISSSSSSSSNTFGEEKE) is disordered. Positions 106-124 (HNNNNNNNNISSSSSSSSN) are enriched in low complexity. N-linked (GlcNAc...) asparagine glycosylation is present at asparagine 114. Residues asparagine 147, threonine 150, and proline 152 each coordinate Ca(2+). A glycan (N-linked (GlcNAc...) asparagine) is linked at asparagine 173. Glycine 207 lines the Ca(2+) pocket. An N-linked (GlcNAc...) asparagine glycan is attached at asparagine 263. 2 disordered regions span residues 266-286 (HAATSKRKRHSTNERGYDTFS) and 305-334 (NNNNYYYSHSSNGHNSSSRNSSSSRSRPGK). The segment covering 305–330 (NNNNYYYSHSSNGHNSSSRNSSSSRS) has biased composition (low complexity). N-linked (GlcNAc...) asparagine glycosylation is found at asparagine 319 and asparagine 324. Glutamate 340 serves as a coordination point for Ca(2+). Residues 345–663 (QWGLDLSRLD…AGYADINKAV (319 aa)) enclose the Peptidase S8 domain. Disulfide bonds link cysteine 371/cysteine 481 and cysteine 460/cysteine 477. Aspartate 374 serves as the catalytic Charge relay system. Ca(2+) contacts are provided by aspartate 383, glutamate 394, arginine 398, phenylalanine 401, aspartate 402, aspartate 403, aspartate 404, asparagine 406, isoleucine 408, aspartate 410, and aspartate 411. Asparagine 419 carries N-linked (GlcNAc...) asparagine glycosylation. The active-site Charge relay system is the histidine 430. Positions 441, 444, 446, and 448 each coordinate Ca(2+). Residues asparagine 490, asparagine 503, and asparagine 522 are each glycosylated (N-linked (GlcNAc...) asparagine). Cysteines 523 and 536 form a disulfide. N-linked (GlcNAc...) asparagine glycosylation occurs at asparagine 605. The active-site Charge relay system is serine 608. Asparagine 677 carries N-linked (GlcNAc...) asparagine glycosylation.

It belongs to the peptidase S8 family. In terms of assembly, heterodimer between p54 form and prodomain p31; the interaction inhibits p54 catalytic activity. Heterodimer p31-p54 is monomeric at basic pH and dimeric at acidic pH; dimerization is driven by the N-terminal prodomain (p31). It depends on Ca(2+) as a cofactor. In terms of processing, the prodomain (p31) is cleaved, probably by autocatalysis, during the transport to or in the Golgi apparatus, and remains non-covalently associated with the p54 form as an inhibitor. p54 is further cleaved into the p47 form. This cleavage is likely occurring in the exoneme prior to egress and is mediated by PMX/plasmepsin X. The p54-to-p47 conversion can be also autocatalytic. Heterodimer p31-p54 is activated by cleavage of prodomain (p31) by the aspartic protease PMX; cleavage by PMX abolishes inhibitory capacity of p31. Primary autocatalytic processing of SUB1 is essential for parasite growth; the p54-to-p47 conversion is dispensable for SUB1 functions in the parasites. The disulfide bond between Cys-523 and Cys-536 acts as a redox-sensitive disulfide switch. The oxidized form is required for catalytic activity. Post-translationally, the relevance of N-glycosylation is not clear. In an insect expression system, SUB1 glycosylation appears to affect its processing into the active mature form suggesting that SUB1 may not be N-glycosylated in parasites.

The protein resides in the secreted. The protein localises to the parasitophorous vacuole lumen. It carries out the reaction Hydrolysis of proteins with broad specificity for peptide bonds, and a preference for a large uncharged residue in P1. Hydrolyzes peptide amides.. P54 and probably p47 forms are inhibited by the non-covalent interaction with the cleaved propeptide. Inhibited by subtilisin propeptide-like protein SUB1-ProM. Inhibited by 3,4-dichloroisocoumarin (DCI) and 4-(hydroxymercuri)benzoic acid (pHMB). Partially inhibited by chymostatin, leupeptin, phenylmethylsulfonyl fluoride (PMSF), and 4-(2-aminoethyl)benzenesulfonyl fluoride. In terms of biological role, serine protease which plays an essential role in merozoite invasion of and egress from host erythrocytes by processing and activating various merozoite surface and parasitophorous vacuole proteins. Mediates the proteolytic maturation of serine proteases SERA4, SERA5 and SERA6 just prior to merozoite egress. Prior to merozoite egress, cleaves merozoite surface proteins MSP1, MSP6 and MSP7, which form the MSP1/6/7 complex, and thereby may prime the parasite cell surface for invasion of fresh erythrocytes. Prior to merozoite egress, cleaves MSRP2 converting it to MSRP2 p25 form, and RAP1 converting it to RAP1 p67 form. This Plasmodium falciparum protein is Subtilisin-like protease 1.